The primary structure comprises 313 residues: Aspartate carbamoyltransferase catalytic subunit (313 aa).

Carbamoyl phosphate contacts are provided by Arg-59 and Thr-60. Residue Lys-87 participates in L-aspartate binding. Positions 109, 137, and 140 each coordinate carbamoyl phosphate. 2 residues coordinate L-aspartate: Arg-170 and Arg-224. Residues Gly-265 and Pro-266 each coordinate carbamoyl phosphate.

The protein belongs to the aspartate/ornithine carbamoyltransferase superfamily. ATCase family. In terms of assembly, heterododecamer (2C3:3R2) of six catalytic PyrB chains organized as two trimers (C3), and six regulatory PyrI chains organized as three dimers (R2).

The catalysed reaction is carbamoyl phosphate + L-aspartate = N-carbamoyl-L-aspartate + phosphate + H(+). Its pathway is pyrimidine metabolism; UMP biosynthesis via de novo pathway; (S)-dihydroorotate from bicarbonate: step 2/3. Catalyzes the condensation of carbamoyl phosphate and aspartate to form carbamoyl aspartate and inorganic phosphate, the committed step in the de novo pyrimidine nucleotide biosynthesis pathway. The protein is Aspartate carbamoyltransferase catalytic subunit of Sinorhizobium medicae (strain WSM419) (Ensifer medicae).